The following is a 373-amino-acid chain: Putative F-box/kelch-repeat protein At5g24040 (373 aa).

The F-box domain maps to 2 to 50 (VKWSELPPEILHLISLKIDNPFDLIHFRSVCSFWRSSSLLKFRHMTSLR). Kelch repeat units follow at residues 165–207 (NEYM…PFKG) and 262–308 (YDFH…CTFS).

This chain is Putative F-box/kelch-repeat protein At5g24040, found in Arabidopsis thaliana (Mouse-ear cress).